The following is a 776-amino-acid chain: 1,4-alpha-glucan branching enzyme GlgB (776 aa).

Asp-431 functions as the Nucleophile in the catalytic mechanism. Catalysis depends on Glu-484, which acts as the Proton donor.

This sequence belongs to the glycosyl hydrolase 13 family. GlgB subfamily. As to quaternary structure, monomer.

The enzyme catalyses Transfers a segment of a (1-&gt;4)-alpha-D-glucan chain to a primary hydroxy group in a similar glucan chain.. It participates in glycan biosynthesis; glycogen biosynthesis. Functionally, catalyzes the formation of the alpha-1,6-glucosidic linkages in glycogen by scission of a 1,4-alpha-linked oligosaccharide from growing alpha-1,4-glucan chains and the subsequent attachment of the oligosaccharide to the alpha-1,6 position. This is 1,4-alpha-glucan branching enzyme GlgB from Trichodesmium erythraeum (strain IMS101).